We begin with the raw amino-acid sequence, 599 residues long: Elongation factor 4 (599 aa).

Residues alanine 5 to lysine 187 form the tr-type G domain. GTP contacts are provided by residues aspartate 17–threonine 22 and asparagine 134–aspartate 137.

The protein belongs to the TRAFAC class translation factor GTPase superfamily. Classic translation factor GTPase family. LepA subfamily.

It localises to the cell inner membrane. It catalyses the reaction GTP + H2O = GDP + phosphate + H(+). In terms of biological role, required for accurate and efficient protein synthesis under certain stress conditions. May act as a fidelity factor of the translation reaction, by catalyzing a one-codon backward translocation of tRNAs on improperly translocated ribosomes. Back-translocation proceeds from a post-translocation (POST) complex to a pre-translocation (PRE) complex, thus giving elongation factor G a second chance to translocate the tRNAs correctly. Binds to ribosomes in a GTP-dependent manner. The polypeptide is Elongation factor 4 (Ruegeria pomeroyi (strain ATCC 700808 / DSM 15171 / DSS-3) (Silicibacter pomeroyi)).